The chain runs to 592 residues: Proline--tRNA ligase (592 aa).

It belongs to the class-II aminoacyl-tRNA synthetase family. ProS type 1 subfamily. In terms of assembly, homodimer.

The protein localises to the cytoplasm. It carries out the reaction tRNA(Pro) + L-proline + ATP = L-prolyl-tRNA(Pro) + AMP + diphosphate. Catalyzes the attachment of proline to tRNA(Pro) in a two-step reaction: proline is first activated by ATP to form Pro-AMP and then transferred to the acceptor end of tRNA(Pro). As ProRS can inadvertently accommodate and process non-cognate amino acids such as alanine and cysteine, to avoid such errors it has two additional distinct editing activities against alanine. One activity is designated as 'pretransfer' editing and involves the tRNA(Pro)-independent hydrolysis of activated Ala-AMP. The other activity is designated 'posttransfer' editing and involves deacylation of mischarged Ala-tRNA(Pro). The misacylated Cys-tRNA(Pro) is not edited by ProRS. The sequence is that of Proline--tRNA ligase from Corynebacterium urealyticum (strain ATCC 43042 / DSM 7109).